A 161-amino-acid chain; its full sequence is MNLNIKEIKQKINEWKNREWRWKGKGKIEIRFVCLIERAESFKELVDNLEIIICEYEKIKQLIEDKDIKEIAKLNLFCGNNVYEEMLKDILSSNKFISLTISFDENIAYVKYMERGKEEVVYLDGKSAYKALQILKNRYENILKKQISIIEDAIPLTIPSQ.

This is an uncharacterized protein from Methanocaldococcus jannaschii (strain ATCC 43067 / DSM 2661 / JAL-1 / JCM 10045 / NBRC 100440) (Methanococcus jannaschii).